The sequence spans 340 residues: Heat-inducible transcription repressor HrcA (340 aa).

It belongs to the HrcA family.

Functionally, negative regulator of class I heat shock genes (grpE-dnaK-dnaJ and groELS operons). Prevents heat-shock induction of these operons. The protein is Heat-inducible transcription repressor HrcA of Burkholderia cenocepacia (strain HI2424).